The chain runs to 630 residues: tRNA uridine 5-carboxymethylaminomethyl modification enzyme MnmG (630 aa).

13 to 18 (GGGHAG) is a binding site for FAD. Residue 273 to 287 (GPRYCPSIEDKIHRF) participates in NAD(+) binding.

This sequence belongs to the MnmG family. Homodimer. Heterotetramer of two MnmE and two MnmG subunits. FAD serves as cofactor.

It localises to the cytoplasm. In terms of biological role, NAD-binding protein involved in the addition of a carboxymethylaminomethyl (cmnm) group at the wobble position (U34) of certain tRNAs, forming tRNA-cmnm(5)s(2)U34. This Pseudomonas aeruginosa (strain LESB58) protein is tRNA uridine 5-carboxymethylaminomethyl modification enzyme MnmG.